The chain runs to 111 residues: Sulditoxin subunit B (111 aa).

The signal sequence occupies residues 1-19 (MKTLLLALAVVVLVCLGSA). Residues 20-34 (NELGLGRQQIDRGRR) constitute a propeptide that is removed on maturation. Position 35 is a pyrrolidone carboxylic acid (Gln35). Intrachain disulfides connect Cys44-Cys68, Cys47-Cys55, Cys61-Cys87, Cys91-Cys102, and Cys103-Cys108.

The protein belongs to the three-finger toxin family. Ancestral subfamily. Boigatoxin sub-subfamily. In terms of assembly, heterodimer of sulditoxin subunits A and B; probably disulfide-linked. As to expression, expressed by the venom gland.

The protein resides in the secreted. In terms of biological role, reptile-specific neurotoxin (tested on geckos). Inhibits nicotinic acetylcholine receptor (nAChR). Not toxic to mammals (tested on mice). The chain is Sulditoxin subunit B from Spilotes sulphureus (Amazon puffing snake).